We begin with the raw amino-acid sequence, 289 residues long: MRTSNSKKHLGHTARKRFGQNFLSDMNVIHNIVAAINPRNEDFLLEIGPGLGALTEPVAEQVEKLTVIELDRDLAERLRHHPFLHHKLTVIEQDALRFNFRDYFDSLNLNHHQAIRIFGNLPYNISTPLMFHLFKFHDLIQDMHFMLQKEVVKRLCAAPNSKAYGRLTIMAQYYCQVIPVLEVPPTAFKPAPKVDSAVVRLMPYKTLPYPVKDVYWLNRVTTHAFNQRRKTLRNALSTLFTAQQLEMLGINLTDRAENLTISDYARLANWLCDNPPAIDTNQEILYDEL.

The S-adenosyl-L-methionine site is built by asparagine 21, leucine 23, glycine 48, glutamate 69, aspartate 94, and asparagine 120.

Belongs to the class I-like SAM-binding methyltransferase superfamily. rRNA adenine N(6)-methyltransferase family. RsmA subfamily.

The protein localises to the cytoplasm. It catalyses the reaction adenosine(1518)/adenosine(1519) in 16S rRNA + 4 S-adenosyl-L-methionine = N(6)-dimethyladenosine(1518)/N(6)-dimethyladenosine(1519) in 16S rRNA + 4 S-adenosyl-L-homocysteine + 4 H(+). Specifically dimethylates two adjacent adenosines (A1518 and A1519) in the loop of a conserved hairpin near the 3'-end of 16S rRNA in the 30S particle. May play a critical role in biogenesis of 30S subunits. This chain is Ribosomal RNA small subunit methyltransferase A, found in Haemophilus ducreyi (strain 35000HP / ATCC 700724).